The sequence spans 391 residues: Rhizopuspepsin-3 (391 aa).

A signal peptide spans 1–21; that stretch reads MKFTLISSCVTLALMTLSIEA. The propeptide at 22 to 68 is activation peptide; that stretch reads APSGKKVNIPLTKNKDYKPNAKNAIQKAIAKYHRHRSVSSSNSTSTD. The 305-residue stretch at 84-388 folds into the Peptidase A1 domain; sequence YYGEVTVGTP…NPEVPHVQIA (305 aa). Residue Asp-102 is part of the active site. Cys-115 and Cys-118 form a disulfide bridge. Residue Asp-285 is part of the active site. An intrachain disulfide couples Cys-319 to Cys-352.

This sequence belongs to the peptidase A1 family.

It carries out the reaction Hydrolysis of proteins with broad specificity similar to that of pepsin A, preferring hydrophobic residues at P1 and P1'. Clots milk and activates trypsinogen. Does not cleave 4-Gln-|-His-5, but does cleave 10-His-|-Leu-11 and 12-Val-|-Glu-13 in B chain of insulin.. This chain is Rhizopuspepsin-3, found in Rhizopus niveus.